Reading from the N-terminus, the 358-residue chain is Acetylxylan esterase / glucomannan deacetylase (358 aa).

Residues 1 to 18 (MKLLFPILLLTGSYFLSA) form the signal peptide. A lipid anchor (N-palmitoyl cysteine) is attached at Cys19. Cys19 is lipidated: S-diacylglycerol cysteine. The active-site Nucleophile is the Ser160. Residues Asp333 and His335 each act as charge relay system in the active site.

It belongs to the carbohydrate esterase 2 (CE2) family.

Its subcellular location is the cell membrane. The catalysed reaction is Deacetylation of xylans and xylo-oligosaccharides.. The protein operates within glycan degradation; xylan degradation. In terms of biological role, involved in the degradation of plant cell wall polysaccharides. Catalyzes the deacetylation of acetylated birchwood xylan and glucomannan, with equal efficiency, and of the synthetic substrate 4-nitrophenyl acetate (4-NPAc). Does not bind cellulose, cellohexaose and beta-glucan. The chain is Acetylxylan esterase / glucomannan deacetylase from Cellvibrio japonicus (strain Ueda107) (Pseudomonas fluorescens subsp. cellulosa).